Consider the following 394-residue polypeptide: 1-deoxy-D-xylulose 5-phosphate reductoisomerase (394 aa).

Residues threonine 10, glycine 11, serine 12, isoleucine 13, glycine 38, arginine 39, asparagine 40, and asparagine 123 each contribute to the NADPH site. A 1-deoxy-D-xylulose 5-phosphate-binding site is contributed by lysine 124. Glutamate 125 provides a ligand contact to NADPH. Aspartate 149 provides a ligand contact to Mn(2+). 4 residues coordinate 1-deoxy-D-xylulose 5-phosphate: serine 150, glutamate 151, serine 175, and histidine 198. Glutamate 151 is a binding site for Mn(2+). Residue glycine 204 participates in NADPH binding. 1-deoxy-D-xylulose 5-phosphate is bound by residues serine 211, asparagine 216, lysine 217, and glutamate 220. Glutamate 220 provides a ligand contact to Mn(2+).

It belongs to the DXR family. Mg(2+) is required as a cofactor. Mn(2+) serves as cofactor.

It catalyses the reaction 2-C-methyl-D-erythritol 4-phosphate + NADP(+) = 1-deoxy-D-xylulose 5-phosphate + NADPH + H(+). The protein operates within isoprenoid biosynthesis; isopentenyl diphosphate biosynthesis via DXP pathway; isopentenyl diphosphate from 1-deoxy-D-xylulose 5-phosphate: step 1/6. Its function is as follows. Catalyzes the NADPH-dependent rearrangement and reduction of 1-deoxy-D-xylulose-5-phosphate (DXP) to 2-C-methyl-D-erythritol 4-phosphate (MEP). This is 1-deoxy-D-xylulose 5-phosphate reductoisomerase from Cereibacter sphaeroides (strain KD131 / KCTC 12085) (Rhodobacter sphaeroides).